Reading from the N-terminus, the 613-residue chain is Ribosome-associated molecular chaperone SSB (613 aa).

Positions methionine 1–glutamate 391 are nucleotide binding domain (NBD). Residues threonine 16–tyrosine 18, lysine 73, glycine 205–threonine 207, glutamate 271–serine 278, and glycine 342 contribute to the ATP site. The interval threonine 392 to proline 402 is inter-domain linker. The segment at leucine 403–arginine 613 is substrate binding domain (SBD). Positions serine 516–serine 612 are lid domain (SBDalpha). The short motif at isoleucine 574–leucine 582 is the Nuclear export signal element.

This sequence belongs to the heat shock protein 70 family. Ssb-type Hsp70 subfamily. In terms of assembly, binds to ribosomes. Binds close to the ribosomal tunnel exit via contacts with both ribosomal proteins and rRNA. Directly interacts with nascent polypeptides. This interaction is dependent on the ribosome-associated complex (RAC). Interacts with SSE1. Interacts with FES1.

It is found in the cytoplasm. The catalysed reaction is ATP + H2O = ADP + phosphate + H(+). Its function is as follows. Ribosome-bound, Hsp70-type chaperone that assists in the cotranslational folding of newly synthesized proteins in the cytosol. Stimulates folding by interacting with nascent chains, binding to short, largely hydrophobic sequences exposed by unfolded proteins, thereby stabilizing longer, more slowly translated, and aggregation-prone nascent polypeptides and domains that cannot fold stably until fully synthesized. The Hsp70-protein substrate interaction depends on ATP-binding and on allosteric regulation between the NBD and the SBD. The ATP-bound state is characterized by a fast exchange rate of substrate (low affinity state), while in the ADP-bound state exchange is much slower (high affinity state). During the Hsp70 cycle, the chaperone switches between the ATP-bound state (open conformation) and the ADP-bound state (closed conformation) by major conformational rearrangements involving mainly the lid domain. Ssb cooperates with a specific Hsp40/Hsp70 co-chaperone termed the ribosome-associated complex (RAC), which stimulates the ATPase activity of the ribosome-associated pool of Ssbs and switches it to the high affinity substrate binding state. Hsp110 chaperone SSE1 and FES1 act as nucleotide exchange factors that cause substrate release. This is Ribosome-associated molecular chaperone SSB (SSB1) from Candida glabrata (strain ATCC 2001 / BCRC 20586 / JCM 3761 / NBRC 0622 / NRRL Y-65 / CBS 138) (Yeast).